The sequence spans 251 residues: Small ribosomal subunit protein uS2 (251 aa).

A disordered region spans residues 232–251; the sequence is EAIAEMDEQVEEDAEEASND.

This sequence belongs to the universal ribosomal protein uS2 family.

In Chlorobaculum parvum (strain DSM 263 / NCIMB 8327) (Chlorobium vibrioforme subsp. thiosulfatophilum), this protein is Small ribosomal subunit protein uS2.